Here is a 194-residue protein sequence, read N- to C-terminus: Orotate phosphoribosyltransferase (194 aa).

A 5-phospho-alpha-D-ribose 1-diphosphate-binding site is contributed by 116–124 (EDIVTTGLS). Thr120 and Arg148 together coordinate orotate.

This sequence belongs to the purine/pyrimidine phosphoribosyltransferase family. PyrE subfamily. As to quaternary structure, homodimer. Mg(2+) is required as a cofactor.

The enzyme catalyses orotidine 5'-phosphate + diphosphate = orotate + 5-phospho-alpha-D-ribose 1-diphosphate. Its pathway is pyrimidine metabolism; UMP biosynthesis via de novo pathway; UMP from orotate: step 1/2. Catalyzes the transfer of a ribosyl phosphate group from 5-phosphoribose 1-diphosphate to orotate, leading to the formation of orotidine monophosphate (OMP). The chain is Orotate phosphoribosyltransferase from Caulobacter vibrioides (strain ATCC 19089 / CIP 103742 / CB 15) (Caulobacter crescentus).